A 255-amino-acid chain; its full sequence is 1-(5-phosphoribosyl)-5-[(5-phosphoribosylamino)methylideneamino] imidazole-4-carboxamide isomerase (255 aa).

Residue Asp8 is the Proton acceptor of the active site. Asp129 functions as the Proton donor in the catalytic mechanism.

The protein belongs to the HisA/HisF family.

The protein resides in the cytoplasm. It catalyses the reaction 1-(5-phospho-beta-D-ribosyl)-5-[(5-phospho-beta-D-ribosylamino)methylideneamino]imidazole-4-carboxamide = 5-[(5-phospho-1-deoxy-D-ribulos-1-ylimino)methylamino]-1-(5-phospho-beta-D-ribosyl)imidazole-4-carboxamide. Its pathway is amino-acid biosynthesis; L-histidine biosynthesis; L-histidine from 5-phospho-alpha-D-ribose 1-diphosphate: step 4/9. The chain is 1-(5-phosphoribosyl)-5-[(5-phosphoribosylamino)methylideneamino] imidazole-4-carboxamide isomerase from Synechococcus sp. (strain CC9902).